The chain runs to 102 residues: Large ribosomal subunit protein bL21 (102 aa).

It belongs to the bacterial ribosomal protein bL21 family. In terms of assembly, part of the 50S ribosomal subunit. Contacts protein L20.

Functionally, this protein binds to 23S rRNA in the presence of protein L20. In Leptospira biflexa serovar Patoc (strain Patoc 1 / Ames), this protein is Large ribosomal subunit protein bL21.